Here is a 339-residue protein sequence, read N- to C-terminus: S-adenosylmethionine:tRNA ribosyltransferase-isomerase (339 aa).

The protein belongs to the QueA family. Monomer.

The protein localises to the cytoplasm. The enzyme catalyses 7-aminomethyl-7-carbaguanosine(34) in tRNA + S-adenosyl-L-methionine = epoxyqueuosine(34) in tRNA + adenine + L-methionine + 2 H(+). The protein operates within tRNA modification; tRNA-queuosine biosynthesis. Transfers and isomerizes the ribose moiety from AdoMet to the 7-aminomethyl group of 7-deazaguanine (preQ1-tRNA) to give epoxyqueuosine (oQ-tRNA). This chain is S-adenosylmethionine:tRNA ribosyltransferase-isomerase, found in Campylobacter fetus subsp. fetus (strain 82-40).